The sequence spans 432 residues: Serine--tRNA ligase (432 aa).

Residue 236–238 (TSE) coordinates L-serine. 267–269 (RSE) contacts ATP. L-serine is bound at residue E290. 354–357 (EISS) lines the ATP pocket. S390 contributes to the L-serine binding site.

It belongs to the class-II aminoacyl-tRNA synthetase family. Type-1 seryl-tRNA synthetase subfamily. Homodimer. The tRNA molecule binds across the dimer.

Its subcellular location is the cytoplasm. It catalyses the reaction tRNA(Ser) + L-serine + ATP = L-seryl-tRNA(Ser) + AMP + diphosphate + H(+). It carries out the reaction tRNA(Sec) + L-serine + ATP = L-seryl-tRNA(Sec) + AMP + diphosphate + H(+). It participates in aminoacyl-tRNA biosynthesis; selenocysteinyl-tRNA(Sec) biosynthesis; L-seryl-tRNA(Sec) from L-serine and tRNA(Sec): step 1/1. In terms of biological role, catalyzes the attachment of serine to tRNA(Ser). Is also able to aminoacylate tRNA(Sec) with serine, to form the misacylated tRNA L-seryl-tRNA(Sec), which will be further converted into selenocysteinyl-tRNA(Sec). In Pseudoalteromonas atlantica (strain T6c / ATCC BAA-1087), this protein is Serine--tRNA ligase.